The sequence spans 351 residues: Photosystem II D2 protein (351 aa).

A helical transmembrane segment spans residues 39–59 (TAYLAIGGWLTGTTFVTSWYT). Chlorophyll a is bound at residue H116. Residues 123–139 (GFMLRQFEISRLVGIRP) form a helical membrane-spanning segment. Pheophytin a is bound by residues Q128 and N141. Residues 151–164 (VFVSVFLIYPLGQS) form a helical membrane-spanning segment. H196 provides a ligand contact to chlorophyll a. Residues 206-226 (GALLSAIHGVTVENTLYEDGE) traverse the membrane as a helical segment. 2 residues coordinate a plastoquinone: H213 and F260. Fe cation is bound at residue H213. H267 provides a ligand contact to Fe cation. Residues 277–293 (GLWTSSIGIIGLALNLR) traverse the membrane as a helical segment.

The protein belongs to the reaction center PufL/M/PsbA/D family. In terms of assembly, PSII is composed of 1 copy each of membrane proteins PsbA, PsbB, PsbC, PsbD, PsbE, PsbF, PsbH, PsbI, PsbJ, PsbK, PsbL, PsbM, PsbT, PsbX, PsbY, PsbZ, Psb30/Ycf12, peripheral proteins PsbO, CyanoQ (PsbQ), PsbU, PsbV and a large number of cofactors. It forms dimeric complexes. The D1/D2 heterodimer binds P680, chlorophylls that are the primary electron donor of PSII, and subsequent electron acceptors. It shares a non-heme iron and each subunit binds pheophytin, quinone, additional chlorophylls, carotenoids and lipids. There is also a Cl(-1) ion associated with D1 and D2, which is required for oxygen evolution. The PSII complex binds additional chlorophylls, carotenoids and specific lipids. serves as cofactor.

The protein localises to the host cellular thylakoid membrane. It carries out the reaction 2 a plastoquinone + 4 hnu + 2 H2O = 2 a plastoquinol + O2. Its function is as follows. Photosystem II (PSII) is a light-driven water:plastoquinone oxidoreductase that uses light energy to abstract electrons from H(2)O, generating O(2) and a proton gradient subsequently used for ATP formation. It consists of a core antenna complex that captures photons, and an electron transfer chain that converts photonic excitation into a charge separation. The D1/D2 (PsbA/PsbD) reaction center heterodimer binds P680, the primary electron donor of PSII as well as several subsequent electron acceptors. D2 is needed for assembly of a stable PSII complex. The protein is Photosystem II D2 protein (psbD) of Synechococcus.